Here is a 148-residue protein sequence, read N- to C-terminus: Lysozyme C-3 (148 aa).

Residues 1–18 (MKTLLVLALLLLSVSVQA) form the signal peptide. Positions 19–148 (KVYDRCEFAR…VSQYIRGCKL (130 aa)) constitute a C-type lysozyme domain. Disulfide bonds link C24-C146, C48-C134, C83-C99, and C95-C113. Residues E53 and D71 contribute to the active site.

It belongs to the glycosyl hydrolase 22 family. As to quaternary structure, monomer.

It localises to the secreted. It carries out the reaction Hydrolysis of (1-&gt;4)-beta-linkages between N-acetylmuramic acid and N-acetyl-D-glucosamine residues in a peptidoglycan and between N-acetyl-D-glucosamine residues in chitodextrins.. In terms of biological role, lysozymes have primarily a bacteriolytic function; those in tissues and body fluids are associated with the monocyte-macrophage system and enhance the activity of immunoagents. The chain is Lysozyme C-3 from Sus scrofa (Pig).